We begin with the raw amino-acid sequence, 283 residues long: Pantothenate synthetase (283 aa).

An ATP-binding site is contributed by 34–41; the sequence is MGALHDGH. The active-site Proton donor is His41. Gln65 serves as a coordination point for (R)-pantoate. Gln65 is a binding site for beta-alanine. 152–155 is an ATP binding site; sequence GQKD. Gln158 contacts (R)-pantoate. Residues Val181 and 189–192 each bind ATP; that span reads MSSR.

It belongs to the pantothenate synthetase family. In terms of assembly, homodimer.

It is found in the cytoplasm. The enzyme catalyses (R)-pantoate + beta-alanine + ATP = (R)-pantothenate + AMP + diphosphate + H(+). It participates in cofactor biosynthesis; (R)-pantothenate biosynthesis; (R)-pantothenate from (R)-pantoate and beta-alanine: step 1/1. In terms of biological role, catalyzes the condensation of pantoate with beta-alanine in an ATP-dependent reaction via a pantoyl-adenylate intermediate. The polypeptide is Pantothenate synthetase (Nitrobacter hamburgensis (strain DSM 10229 / NCIMB 13809 / X14)).